A 128-amino-acid polypeptide reads, in one-letter code: L-ectoine synthase (128 aa).

It belongs to the ectoine synthase family.

It catalyses the reaction (2S)-4-acetamido-2-aminobutanoate = L-ectoine + H2O. Its pathway is amine and polyamine biosynthesis; ectoine biosynthesis; L-ectoine from L-aspartate 4-semialdehyde: step 3/3. Catalyzes the circularization of gamma-N-acetyl-alpha,gamma-diaminobutyric acid (ADABA) to ectoine (1,4,5,6-tetrahydro-2-methyl-4-pyrimidine carboxylic acid), which is an excellent osmoprotectant. This is L-ectoine synthase from Vibrio campbellii (strain ATCC BAA-1116).